The chain runs to 1136 residues: MRQLNYYIFISTILTYNLTHGQGPRPVIRVGITAALKTENGSIGWAYTGGAVPLALQYLKSHGYMLNFDFEFHVEYTECDLANTVRAGLNFMKTNNYDVIIGPPCAPALKMMGTLSTIYKKPVLGWGFVSESEISDMNRFPFVASVLPSTKTLGVVTSKLLEIYGWDRVALLYFKNELDYCSSVVNDVEKSLYNESKSVQIVMKAEIDGSNSESTSATLQVVKTRARVILFCAHAGGEKRFYLIQAGLLGMNSSEYVHVMLSMRSVGFGVQTSVGKKPLTLSGLPPIWESFTVNPDGMEDLAKSVAAKMIVIDTSSEVRDKTFLQYMTKNIVYAIREPPLSCKVPECLITNATGMGAYARHLFDVFYMYGMAVSSLNSTDPNVYGNLSLLIPKFTTAFEGMTGEVKLNEDLARKPLYQVYGLNSEYDQISLIDISLINDTVNVVFNYADGNTEVWHFWGGTRPPDTPVCGFLGKSCPLPIFEQYRALVIVAIAVTILILLAIIICMSSKIRNRRVEQSRLHSEWQIHAIKLRLPMHRRASKSSQESETESASETENFTSKSGDTMTSEFKETYTIQYLENDLVLTTAHQVQELSQAEMMKFVKLRKLDHENLNKFIGLSIDGSRFVSVWKMCSRGSLQDIISKGSFSMDYFFMFCMIRDIAEGLHYIHKSFLRHHGNLRSATCLVNDSWQVKLADFGLQFLQDEEEKPFKKNMLWAAPEVIRGSLSIEQMDSSADIYSFAIVASEILTKREAWDLSRRKEGYEEIKYAVKKGGQFVLRPDLHIDIEVNQTLLALVKDCWCENPEERPSAENVCKVLFDMTPNTEDNLMDHVFSMLEEYTSSLEVEVGERTKELTLEKKKSDILLGRMLPKQVAERLKAGQAVEPESFDLVTVFFSDLVKFTDLASKCSPFQVVNLLNDVFSNFDSIIEKHDVYKVESIGDGFLCVSGLPNRNGMEHIRQIVGMSLCFMEFCRNFRIPHLPRERVELRVGINSGPCVAGVVGLSMPRYCLFGDTVNTASRMESNGKPSMIHMSEAAHSLLVNNYPYQFETNSRGEVIIKGKGVMETYWLLGKMSLSNQSTPPITKVNHKPRKIASFTDSELTNYSFRSVSPYVENLSDNDDEEIRRVLRREMMRVEV.

An N-terminal signal peptide occupies residues 1–21 (MRQLNYYIFISTILTYNLTHG). At 22-485 (QGPRPVIRVG…CPLPIFEQYR (464 aa)) the chain is on the extracellular side. N-linked (GlcNAc...) asparagine glycans are attached at residues Asn40, Asn194, Asn252, Asn351, Asn377, Asn386, and Asn438. A helical transmembrane segment spans residues 486–506 (ALVIVAIAVTILILLAIIICM). Over 507–1136 (SSKIRNRRVE…LRREMMRVEV (630 aa)) the chain is Cytoplasmic. A Protein kinase domain is found at 533-833 (LPMHRRASKS…EDNLMDHVFS (301 aa)). The tract at residues 536-565 (HRRASKSSQESETESASETENFTSKSGDTM) is disordered. The region spanning 891-1021 (TVFFSDLVKF…DTVNTASRME (131 aa)) is the Guanylate cyclase domain.

The protein belongs to the adenylyl cyclase class-4/guanylyl cyclase family. Expression is biased toward ASE right (ASER) sensory neuron.

The protein resides in the cell membrane. The catalysed reaction is GTP = 3',5'-cyclic GMP + diphosphate. Functionally, guanylate cyclase involved in the production of the second messenger cGMP. Regulates chemotaxis responses toward Br(1-) and I(1-) salt ions in ASE right (ASER) sensory neuron. This is Receptor-type guanylate cyclase gcy-4 from Caenorhabditis elegans.